Here is a 391-residue protein sequence, read N- to C-terminus: Methylthioribose-1-phosphate isomerase (391 aa).

Asp-267 (proton donor) is an active-site residue.

This sequence belongs to the eIF-2B alpha/beta/delta subunits family. MtnA subfamily.

It is found in the cytoplasm. The protein resides in the nucleus. It catalyses the reaction 5-(methylsulfanyl)-alpha-D-ribose 1-phosphate = 5-(methylsulfanyl)-D-ribulose 1-phosphate. The protein operates within amino-acid biosynthesis; L-methionine biosynthesis via salvage pathway; L-methionine from S-methyl-5-thio-alpha-D-ribose 1-phosphate: step 1/6. Catalyzes the interconversion of methylthioribose-1-phosphate (MTR-1-P) into methylthioribulose-1-phosphate (MTRu-1-P). This is Methylthioribose-1-phosphate isomerase from Ajellomyces capsulatus (strain NAm1 / WU24) (Darling's disease fungus).